The sequence spans 271 residues: Probable esterase D14L (271 aa).

Serine 96 acts as the Nucleophile in catalysis. Residues aspartate 218 and histidine 247 contribute to the active site.

Belongs to the AB hydrolase superfamily. In terms of assembly, component of an intracellular receptor complex involved in the detection of the smoke compound karrikin. In terms of tissue distribution, expressed constitutively in all organs (e.g. roots, stems, leaves, panicles and embryos).

It localises to the nucleus. The protein resides in the cytoplasm. Functionally, may be involved in strigolactone signaling pathway. Essential for plant responses to karrikins, a class of butenolide compounds, structurally similar to strigolactones, released from burning vegetation that stimulate seed germination and enhance seedling photomorphogenesis. Mediates a specific perception of karrikin. Required for the establishment of symbiosis with the arbuscular mycorrhizal fungi (AMF) Rhizophagus irregularis and Gigaspora rosea. Karrikin binding induces a conformational change. This Oryza sativa subsp. japonica (Rice) protein is Probable esterase D14L (D14L).